Consider the following 129-residue polypeptide: Putative reactive intermediate deaminase TdcF (129 aa).

Lys-58 is subject to N6-(pyridoxal phosphate)lysine. Substrate contacts are provided by residues 105-107 and Glu-120; that span reads RSC.

Belongs to the RutC family. Homotrimer.

Its pathway is amino-acid degradation; L-threonine degradation via propanoate pathway. May be a post-translational regulator that controls the metabolic fate of L-threonine or the potentially toxic intermediate 2-ketobutyrate. The protein is Putative reactive intermediate deaminase TdcF (tdcF) of Escherichia coli O6:H1 (strain CFT073 / ATCC 700928 / UPEC).